Here is a 95-residue protein sequence, read N- to C-terminus: Co-chaperonin GroES (95 aa).

It belongs to the GroES chaperonin family. In terms of assembly, heptamer of 7 subunits arranged in a ring. Interacts with the chaperonin GroEL.

The protein resides in the cytoplasm. Its function is as follows. Together with the chaperonin GroEL, plays an essential role in assisting protein folding. The GroEL-GroES system forms a nano-cage that allows encapsulation of the non-native substrate proteins and provides a physical environment optimized to promote and accelerate protein folding. GroES binds to the apical surface of the GroEL ring, thereby capping the opening of the GroEL channel. This chain is Co-chaperonin GroES, found in Ruegeria sp. (strain TM1040) (Silicibacter sp.).